Reading from the N-terminus, the 116-residue chain is MMLTNRQIRVRLFESLKNSFFKKTVGISFALLFILLITAFSLIVVRFEYKLQLNEQKNLILEDTRLDEQWSQIVLEYSSLATPTAVEKFAQKEKMTLPTRKTIGFLNEQKEELNNE.

The Cytoplasmic portion of the chain corresponds to 1–24; the sequence is MMLTNRQIRVRLFESLKNSFFKKT. The chain crosses the membrane as a helical span at residues 25–45; the sequence is VGISFALLFILLITAFSLIVV. The Periplasmic segment spans residues 46–116; sequence RFEYKLQLNE…NEQKEELNNE (71 aa).

Belongs to the FtsL family. Part of a complex composed of FtsB, FtsL and FtsQ.

It is found in the cell inner membrane. Its function is as follows. Essential cell division protein. May link together the upstream cell division proteins, which are predominantly cytoplasmic, with the downstream cell division proteins, which are predominantly periplasmic. The sequence is that of Cell division protein FtsL from Francisella tularensis subsp. tularensis (strain SCHU S4 / Schu 4).